Consider the following 570-residue polypeptide: MKPIKDLVEVALGKKPADLVLKNAQVFNSFTGEFVTGDVAVVAGYIAGTGEYEGKTTYDLQGAYVTPGFIDGHVHIESSMVAPAEFARALVPAGTLTAVVDPHEIANVSGTAGIRYMLEASSNLPINIYLMLPSCVPATSLETAGAVLTARELSEFINHPRVLGLGELMDYPGVLNTHEEMLKKLAVTEGKLIDGHAPGISGKELTAYIAAGVNSEHECTTAEEARERLSRGMYLMLREGSATKNLLDLLPAVDRYTASRCFFVTDDRHPEDLIKLGSINHMVKLAVSAGADLPTVLQMATINAANYFRLYDLGAIAPGYRADILVFEDLQEFKPKYVFKDGKLVAENGKPLFTGYPVDDRAVRNTMRLKEINPEKLKIPAKSNRARVIGLIPHQIVTKKLELEVPVEGGYFKTSTEKDIAKLAVFERHNYTGNVGVGLIHGLGLKKGAIASTVAHDSHNLVVAGMSDEDIIAAVEELKRIGGGLTVVADGQVLGSLPLPIAGLMSDRTLYEVQEELEKLHRIVRNLGVSENYDPFMTLAFLSLPVIPELKLTDLGLVDVSTFSVVPVSL.

The protein belongs to the metallo-dependent hydrolases superfamily. Adenine deaminase family. Requires Mn(2+) as cofactor.

It carries out the reaction adenine + H2O + H(+) = hypoxanthine + NH4(+). This Carboxydothermus hydrogenoformans (strain ATCC BAA-161 / DSM 6008 / Z-2901) protein is Adenine deaminase 2.